The sequence spans 370 residues: Cobalt-precorrin-5B C(1)-methyltransferase (370 aa).

Belongs to the CbiD family.

The catalysed reaction is Co-precorrin-5B + S-adenosyl-L-methionine = Co-precorrin-6A + S-adenosyl-L-homocysteine. Its pathway is cofactor biosynthesis; adenosylcobalamin biosynthesis; cob(II)yrinate a,c-diamide from sirohydrochlorin (anaerobic route): step 6/10. Its function is as follows. Catalyzes the methylation of C-1 in cobalt-precorrin-5B to form cobalt-precorrin-6A. This chain is Cobalt-precorrin-5B C(1)-methyltransferase, found in Nostoc sp. (strain PCC 7120 / SAG 25.82 / UTEX 2576).